The sequence spans 221 residues: Serotriflin (221 aa).

Residues 19–147 (LDKHNALRRS…SYNYYYVCHY (129 aa)) enclose the SCP domain. A glycan (N-linked (GlcNAc...) asparagine) is linked at N48. 8 disulfide bridges follow: C56-C134, C73-C148, C129-C145, C167-C174, C170-C179, C183-C216, C192-C210, and C201-C214. A ShKT domain is found at 183-216 (CKHVDRYSNCNSLVQQISCQSNNMNTDCPASCFC).

As to quaternary structure, forms a stable, non-covalent complex with SSP-2.

It localises to the secreted. The polypeptide is Serotriflin (Protobothrops flavoviridis (Habu)).